Consider the following 244-residue polypeptide: MQPPGPPPAYAPTNGDFTFVSSADAEDLSGSIASPDVKLNLGGDFIKESTATTFLRQRGYGWLLEVEDDDPEDNKPLLEELDIDLKDIYYKIRCVLMPMPSLGFNRQVVRDNPDFWGPLAVVLFFSMISLYGQFRVVSWIITIWIFGSLTIFLLARVLGGEVAYGQVLGVIGYSLLPLIVIAPVLLVVGSFEVVSTLIKLFGVFWAAYSAASLLVGEEFKTKKPLLIYPIFLLYIYFLSLYTGV.

Topologically, residues 1–113 (MQPPGPPPAY…FNRQVVRDNP (113 aa)) are cytoplasmic. The chain crosses the membrane as a helical span at residues 114–134 (DFWGPLAVVLFFSMISLYGQF). Residues 135–138 (RVVS) are Extracellular-facing. Residues 139–159 (WIITIWIFGSLTIFLLARVLG) traverse the membrane as a helical segment. At 160–166 (GEVAYGQ) the chain is on the cytoplasmic side. Residues 167-187 (VLGVIGYSLLPLIVIAPVLLV) form a helical membrane-spanning segment. Topologically, residues 188–195 (VGSFEVVS) are extracellular. The helical transmembrane segment at 196–216 (TLIKLFGVFWAAYSAASLLVG) threads the bilayer. The Cytoplasmic segment spans residues 217–223 (EEFKTKK). Residues 224–244 (PLLIYPIFLLYIYFLSLYTGV) traverse the membrane as a helical segment.

The protein belongs to the YIP1 family. As to quaternary structure, interacts with YIPF3 and YIPF5. (Microbial infection) Interacts with human papillomavirus (HPV) E5 proteins. As to expression, expressed in keratinocytes (at protein level).

It localises to the golgi apparatus. The protein localises to the cis-Golgi network membrane. In terms of biological role, involved in the maintenance of the Golgi structure. This is Protein YIPF4 (YIPF4) from Homo sapiens (Human).